We begin with the raw amino-acid sequence, 621 residues long: TOX high mobility group box family member 4 (621 aa).

2 disordered regions span residues 153-227 (LGLS…QKPV) and 305-333 (LDPA…ASIE). Phosphothreonine is present on threonine 176. Phosphoserine is present on residues serine 178, serine 181, and serine 182. Basic and acidic residues predominate over residues 183-193 (LHEDGVEDFRR). The segment covering 208–218 (KQKAPKKRKKK) has biased composition (basic residues). The short motif at 213 to 218 (KKRKKK) is the Nuclear localization signal element. The segment at residues 223–291 (PQKPVSAYAL…EYLKALAAYK (69 aa)) is a DNA-binding region (HMG box). Over residues 307 to 319 (PAPPSQTPSPPPM) the composition is skewed to pro residues. Threonine 313 is modified (phosphothreonine). Phosphoserine is present on serine 315. A compositionally biased stretch (low complexity) spans 320–333 (ATVDPASPAPASIE). At arginine 481 the chain carries Asymmetric dimethylarginine. Residues 510–529 (PTVESSPERPMNNSPEAHTV) are disordered. Phosphoserine is present on residues serine 533, serine 550, serine 552, serine 560, serine 562, and serine 567.

As to quaternary structure, component of the PNUTS-PP1 phosphatase complex, composed of PPP1R10/PNUTS, TOX4, WDR82 and PPP1CA or PPP1CB or PPP1CC. Interacts with PPP1R10/PNUTS. Interacts with FOXO1 and CREB1 (increased by cAMP); FOXO1 and CREB1 are required for full induction of TOX4-dependent activity and the interactions are inhibited by insulin.

The protein localises to the nucleus. It localises to the chromosome. In liver, recruited to target gene promoters following treatment with dexamethasone and cAMP. Binding is decreased in presence of insulin. Transcription factor that modulates cell fate reprogramming from the somatic state to the pluripotent and neuronal fate. In liver, controls the expression of hormone-regulated gluconeogenic genes such as G6PC1 and PCK1. This regulation is independent of the insulin receptor activation. Also acts as a regulatory component of protein phosphatase 1 (PP1) complexes. Component of the PNUTS-PP1 protein phosphatase complex, a PP1 complex that regulates RNA polymerase II transcription pause-release. PNUTS-PP1 also plays a role in the control of chromatin structure and cell cycle progression during the transition from mitosis into interphase. The sequence is that of TOX high mobility group box family member 4 (TOX4) from Pongo abelii (Sumatran orangutan).